The primary structure comprises 85 residues: UPF0386 protein RHE_CH01859 (85 aa).

The protein belongs to the UPF0386 family.

The sequence is that of UPF0386 protein RHE_CH01859 from Rhizobium etli (strain ATCC 51251 / DSM 11541 / JCM 21823 / NBRC 15573 / CFN 42).